A 148-amino-acid polypeptide reads, in one-letter code: D-aminoacyl-tRNA deacylase (148 aa).

The short motif at 137 to 138 (GP) is the Gly-cisPro motif, important for rejection of L-amino acids element.

This sequence belongs to the DTD family. As to quaternary structure, homodimer.

It localises to the cytoplasm. The enzyme catalyses glycyl-tRNA(Ala) + H2O = tRNA(Ala) + glycine + H(+). The catalysed reaction is a D-aminoacyl-tRNA + H2O = a tRNA + a D-alpha-amino acid + H(+). Functionally, an aminoacyl-tRNA editing enzyme that deacylates mischarged D-aminoacyl-tRNAs. Also deacylates mischarged glycyl-tRNA(Ala), protecting cells against glycine mischarging by AlaRS. Acts via tRNA-based rather than protein-based catalysis; rejects L-amino acids rather than detecting D-amino acids in the active site. By recycling D-aminoacyl-tRNA to D-amino acids and free tRNA molecules, this enzyme counteracts the toxicity associated with the formation of D-aminoacyl-tRNA entities in vivo and helps enforce protein L-homochirality. The chain is D-aminoacyl-tRNA deacylase from Latilactobacillus sakei subsp. sakei (strain 23K) (Lactobacillus sakei subsp. sakei).